Reading from the N-terminus, the 1165-residue chain is Leptin receptor (1165 aa).

Positions 1–21 (MICQKFCVVLLHWEFIYVITA) are cleaved as a signal peptide. The Extracellular segment spans residues 22-839 (FNLSYPITPW…QDDIEKHQSD (818 aa)). N23, N41, N56, N73, N81, and N98 each carry an N-linked (GlcNAc...) asparagine glycan. Disulfide bonds link C37–C90, C89–C99, C131–C142, C186–C196, and C188–C193. An N-linked (GlcNAc...) asparagine glycan is attached at N187. N-linked (GlcNAc...) asparagine glycosylation is found at N206, N276, N347, and N397. The Fibronectin type-III 1 domain maps to 239-333 (PPLGLHMEIT…TPRVFTTQDV (95 aa)). Residues 331-429 (QDVIYFPPKI…HRYAELYVID (99 aa)) form the Ig-like domain. 5 cysteine pairs are disulfide-bonded: C352–C412, C413–C418, C436–C447, C473–C528, and C488–C498. Positions 467–484 (HRSSLYCSDIPSIHPISE) are leptin-binding. N516, N624, N659, N688, N697, N728, and N750 each carry an N-linked (GlcNAc...) asparagine glycan. Fibronectin type-III domains are found at residues 539–634 (PPSS…TVVM), 639–732 (PMRG…LTFS), and 740–833 (IVQS…QDDI). Residues 622–626 (WSNWS) carry the WSXWS motif motif. A helical membrane pass occupies residues 840 to 862 (AGLYVIVPVIISSSILLLGTLLI). Over 863-1165 (SHQRMKKLFW…MENKMCDLTV (303 aa)) the chain is Cytoplasmic. The Box 1 motif signature appears at 871–879 (FWEDVPNPK). S882 carries the post-translational modification Phosphoserine. Residues 893-898 (ETFEHL) are required for JAK2 activation. Positions 898 to 906 (LFIKHTASV) are required for STAT3 phosphorylation. Y986 bears the Phosphotyrosine; by JAK2 mark. Y1079 carries the post-translational modification Phosphotyrosine. The residue at position 1141 (Y1141) is a Phosphotyrosine; by JAK2.

This sequence belongs to the type I cytokine receptor family. Type 2 subfamily. Present as a mixture of monomers and dimers. The phosphorylated receptor binds a number of SH2 domain-containing proteins such as JAK2, STAT3, PTPN11, and SOCS3. Interaction with SOCS3 inhibits JAK/STAT signaling and MAPK cascade. Post-translationally, on ligand binding, phosphorylated on two conserved C-terminal tyrosine residues (isoform B only) by JAK2. Tyr-986 is required for complete binding and activation of PTPN11, ERK/FOS activation,for interaction with SOCS3 and SOCS3 mediated inhibition of leptin signaling. Phosphorylation on Tyr-1141 is required for STAT3 binding/activation. Phosphorylation of Tyr-1079 has a more accessory role. As to expression, isoform A is expressed in fetal liver and in hematopoietic tissues and choroid plexus. In adults highest expression in heart, liver, small intestine, prostate and ovary. Low level in lung and kidney. Isoform B is highly expressed in hypothalamus, but also in skeletal muscle. Detected in fundic and antral epithelial cells of the gastric mucosa. Isoform B and isoform A are expressed by NK cells (at protein level).

The protein localises to the cell membrane. It localises to the basolateral cell membrane. The protein resides in the secreted. In terms of biological role, receptor for hormone LEP/leptin. On ligand binding, mediates LEP central and peripheral effects through the activation of different signaling pathways such as JAK2/STAT3 and MAPK cascade/FOS. In the hypothalamus, LEP acts as an appetite-regulating factor that induces a decrease in food intake and an increase in energy consumption by inducing anorexinogenic factors and suppressing orexigenic neuropeptides, also regulates bone mass and secretion of hypothalamo-pituitary-adrenal hormones. In the periphery, increases basal metabolism, influences reproductive function, regulates pancreatic beta-cell function and insulin secretion, is pro-angiogenic and affects innate and adaptive immunity. Control of energy homeostasis and melanocortin production (stimulation of POMC and full repression of AgRP transcription) is mediated by STAT3 signaling, whereas distinct signals regulate NPY and the control of fertility, growth and glucose homeostasis. Involved in the regulation of counter-regulatory response to hypoglycemia by inhibiting neurons of the parabrachial nucleus. Has a specific effect on T lymphocyte responses, differentially regulating the proliferation of naive and memory T -ells. Leptin increases Th1 and suppresses Th2 cytokine production. May transport LEP across the blood-brain barrier. Binds LEP and mediates LEP endocytosis. Does not induce phosphorylation of and activate STAT3. Functionally, antagonizes Isoform A and isoform B-mediated LEP binding and endocytosis. The polypeptide is Leptin receptor (LEPR) (Homo sapiens (Human)).